Reading from the N-terminus, the 1218-residue chain is Protein jagged-1 (1218 aa).

A signal peptide spans 1 to 33 (MRSPRTRGRSGRPLSLLLALLCALRAKVCGASG). At 34–1067 (QFELEILSMQ…QRRPLKNRTD (1034 aa)) the chain is on the extracellular side. The N-linked (GlcNAc...) asparagine glycan is linked to Asn143. One can recognise a DSL domain in the interval 185–229 (VTCDDYYYGFGCNKFCRPRDDFFGHYACDQNGNKTCMEGWMGPEC). 2 disulfides stabilise this stretch: Cys187–Cys196 and Cys200–Cys212. The interval 199–207 (FCRPRDDFF) is important for interaction with NOTCH1. N-linked (GlcNAc...) asparagine glycosylation occurs at Asn217. Disulfide bonds link Cys220/Cys229, Cys234/Cys245, Cys238/Cys251, Cys253/Cys262, Cys265/Cys276, Cys271/Cys282, Cys284/Cys293, Cys300/Cys312, Cys306/Cys322, Cys324/Cys333, Cys340/Cys351, Cys345/Cys360, Cys362/Cys371, Cys378/Cys389, Cys383/Cys398, Cys400/Cys409, Cys416/Cys427, Cys421/Cys436, Cys438/Cys447, Cys454/Cys464, Cys458/Cys473, Cys475/Cys484, Cys491/Cys502, Cys496/Cys511, Cys513/Cys522, Cys529/Cys540, Cys534/Cys549, Cys551/Cys560, Cys578/Cys605, Cys599/Cys615, Cys617/Cys626, Cys633/Cys644, Cys638/Cys653, Cys655/Cys664, Cys671/Cys682, Cys676/Cys691, Cys693/Cys702, Cys709/Cys720, Cys714/Cys729, and Cys731/Cys740. Residues 230 to 263 (NRAICRQGCSPKHGSCKLPGDCRCQYGWQGLYCD) enclose the EGF-like 1 domain. An EGF-like 2; atypical domain is found at 264–294 (KCIPHPGCVHGICNEPWQCLCETNWGGQLCD). EGF-like domains follow at residues 296–334 (DLNYCGTHQPCLNGGTCSNTGPDKYQCSCPEGYSGPNCE) and 336–372 (AEHACLSDPCHNRGSCKETSLGFECECSPGWTGPTCS). Residues 374 to 410 (NIDDCSPNNCSHGGTCQDLVNGFKCVCPPQWTGKTCQ) enclose the EGF-like 5; calcium-binding domain. Residue Asn382 is glycosylated (N-linked (GlcNAc...) asparagine). In terms of domain architecture, EGF-like 6; calcium-binding spans 412-448 (DANECEAKPCVNAKSCKNLIASYYCDCLPGWMGQNCD). The 36-residue stretch at 450 to 485 (NINDCLGQCQNDASCRDLVNGYRCICPPGYAGDHCE) folds into the EGF-like 7; calcium-binding domain. In terms of domain architecture, EGF-like 8; calcium-binding spans 487 to 523 (DIDECASNPCLNGGHCQNEINRFQCLCPTGFSGNLCQ). 2 EGF-like domains span residues 525–561 (DIDYCEPNPCQNGAQCYNRASDYFCKCPEDYEGKNCS) and 586–627 (DTPE…TYCH). Asn559 is a glycosylation site (N-linked (GlcNAc...) asparagine). The region spanning 629–665 (NINDCESNPCRNGGTCIDGVNSYKCICSDGWEGAYCE) is the EGF-like 11; calcium-binding domain. The EGF-like 12; calcium-binding domain occupies 667-703 (NINDCSQNPCHNGGTCRDLVNDFYCDCKNGWKGKTCH). 2 consecutive EGF-like domains span residues 705–741 (RDSQCDEATCNNGGTCYDEGDAFKCMCPGGWEGTTCN) and 744–780 (RNSSCLPNPCHNGGTCVVNGESFTCVCKEGWEGPICA). Residue Asn745 is glycosylated (N-linked (GlcNAc...) asparagine). Disulfide bonds link Cys748-Cys759, Cys753-Cys768, Cys770-Cys779, Cys786-Cys797, Cys791-Cys806, Cys808-Cys817, Cys824-Cys835, Cys829-Cys844, and Cys846-Cys855. Residues 782–818 (NTNDCSPHPCYNSGTCVDGDNWYRCECAPGFAGPDCR) enclose the EGF-like 15; calcium-binding domain. Residues 820–856 (NINECQSSPCAFGATCVDEINGYRCVCPPGHSGAKCQ) enclose the EGF-like 16; calcium-binding domain. Residues Asn960, Asn991, Asn1045, and Asn1064 are each glycosylated (N-linked (GlcNAc...) asparagine). Residues 1068–1093 (FLVPLLSSVLTVAWICCLVTAFYWCL) traverse the membrane as a helical segment. Residues 1094-1218 (RKRRKPGSHT…QSLNRMEYIV (125 aa)) are Cytoplasmic-facing. Residues 1152–1218 (HNSEVEEDDM…QSLNRMEYIV (67 aa)) are disordered. Polar residues predominate over residues 1189–1199 (TPTKHPNWTNK).

As to quaternary structure, interacts with NOTCH2 and NOTCH3. Interacts with NOTCH1 (in the presence of calcium ions). As to expression, widely expressed in adult and fetal tissues. In cervix epithelium expressed in undifferentiated subcolumnar reserve cells and squamous metaplasia. Expression is up-regulated in cervical squamous cell carcinoma. Expressed in bone marrow cell line HS-27a which supports the long-term maintenance of immature progenitor cells.

The protein localises to the membrane. It localises to the cell membrane. Its function is as follows. Ligand for multiple Notch receptors and involved in the mediation of Notch signaling. May be involved in cell-fate decisions during hematopoiesis. Seems to be involved in early and late stages of mammalian cardiovascular development. Inhibits myoblast differentiation. Enhances fibroblast growth factor-induced angiogenesis (in vitro). The protein is Protein jagged-1 (JAG1) of Homo sapiens (Human).